A 358-amino-acid polypeptide reads, in one-letter code: Phosphoserine aminotransferase (358 aa).

An L-glutamate-binding site is contributed by R41. Pyridoxal 5'-phosphate contacts are provided by residues 75-76 (AS), W100, T148, D167, and Q190. K191 carries the post-translational modification N6-(pyridoxal phosphate)lysine. 233–234 (NT) serves as a coordination point for pyridoxal 5'-phosphate.

The protein belongs to the class-V pyridoxal-phosphate-dependent aminotransferase family. SerC subfamily. In terms of assembly, homodimer. Pyridoxal 5'-phosphate is required as a cofactor.

The protein localises to the cytoplasm. The enzyme catalyses O-phospho-L-serine + 2-oxoglutarate = 3-phosphooxypyruvate + L-glutamate. It catalyses the reaction 4-(phosphooxy)-L-threonine + 2-oxoglutarate = (R)-3-hydroxy-2-oxo-4-phosphooxybutanoate + L-glutamate. Its pathway is amino-acid biosynthesis; L-serine biosynthesis; L-serine from 3-phospho-D-glycerate: step 2/3. The protein operates within cofactor biosynthesis; pyridoxine 5'-phosphate biosynthesis; pyridoxine 5'-phosphate from D-erythrose 4-phosphate: step 3/5. Its function is as follows. Catalyzes the reversible conversion of 3-phosphohydroxypyruvate to phosphoserine and of 3-hydroxy-2-oxo-4-phosphonooxybutanoate to phosphohydroxythreonine. The chain is Phosphoserine aminotransferase from Campylobacter jejuni subsp. jejuni serotype O:23/36 (strain 81-176).